The chain runs to 236 residues: Phycobilisome rod-core linker polypeptide cpcG (236 aa).

The PBS-linker domain maps to 11 to 193 (STQNQRVNGF…LDYNFLYKKN (183 aa)).

This sequence belongs to the phycobilisome linker protein family. In terms of assembly, the phycobilisome is a hemidiscoidal structure that is composed of two distinct substructures: a core complex and a number of rods radiating from the core.

Its subcellular location is the plastid. The protein localises to the chloroplast. It localises to the chloroplast thylakoid membrane. Its function is as follows. Rod-core linker protein required for attachment of phycocyanin to allophycocyanin in cores of phycobilisomes. Functionally, linker polypeptides determine the state of aggregation and the location of the disk-shaped phycobiliprotein units within the phycobilisome and modulate their spectroscopic properties in order to mediate a directed and optimal energy transfer. The protein is Phycobilisome rod-core linker polypeptide cpcG (cpcG) of Aglaothamnion neglectum (Red alga).